A 396-amino-acid polypeptide reads, in one-letter code: MSGEKKSRHVMYKKTSRDKAVSVYLGKRDYVDHVDSVEPVDGVVLVDPDLLKGKKVYVTLTCAFRYGQEDIDVIGLTFRKDLYYARTQIYPPVEDPKALTKVQERLMKKLGNNAFPFVLEFPDFLPCSVSLQPAPSDVGKACGVDFEIKAFSTNNLEDRIHKKNSVRLMIRKIQYAPDQPGPKPRAETSWQFFMSDKPLHLTASLSKEVFYHGEPITVSVSVTNKSDKTVKKISASVEQVSNVVLYSSDYYIKTVALEESNEKVPSKASYNHTFSLLPLLAYNREKREIALDGKLKHEDTNLASSTLLKEGTDRTVMGILVDYKIKVTLTVSGLLGDMTSSEVSTELPFILMHPNPDGGAKESEQEDDMVFEEFARDPLKGELQAEEKEEEEDDEK.

Basic and acidic residues predominate over residues 375 to 386; that stretch reads ARDPLKGELQAE. The interval 375–396 is disordered; that stretch reads ARDPLKGELQAEEKEEEEDDEK. Residues 387 to 396 are compositionally biased toward acidic residues; the sequence is EKEEEEDDEK.

It belongs to the arrestin family. In terms of assembly, interacts with RHO (via the phosphorylated C-terminus).

It is found in the cell projection. The protein localises to the cilium. It localises to the photoreceptor outer segment. Its subcellular location is the membrane. Functionally, binds to photoactivated, phosphorylated RHO and terminates RHO signaling via G-proteins by competing with G-proteins for the same binding site on RHO. May play a role in preventing light-dependent degeneration of retinal photoreceptor cells. The chain is S-arrestin (sag) from Xenopus laevis (African clawed frog).